The following is a 100-amino-acid chain: Small ribosomal subunit protein bS20 (100 aa).

Belongs to the bacterial ribosomal protein bS20 family.

Its function is as follows. Binds directly to 16S ribosomal RNA. This is Small ribosomal subunit protein bS20 from Prochlorococcus marinus (strain MIT 9211).